Reading from the N-terminus, the 369-residue chain is Porphobilinogen deaminase, chloroplastic (369 aa).

The transit peptide at 1–46 (MEMTLYSSSSFSLPSAPSNPSLSLFTSSFRFSSFKTSPFSKCRIRA) directs the protein to the chloroplast. Cys303 carries the post-translational modification S-(dipyrrolylmethanemethyl)cysteine.

The protein belongs to the HMBS family. Dipyrromethane serves as cofactor.

Its subcellular location is the plastid. The protein resides in the chloroplast. It catalyses the reaction 4 porphobilinogen + H2O = hydroxymethylbilane + 4 NH4(+). Its pathway is porphyrin-containing compound metabolism; protoporphyrin-IX biosynthesis; coproporphyrinogen-III from 5-aminolevulinate: step 2/4. It participates in porphyrin-containing compound metabolism; chlorophyll biosynthesis. In terms of biological role, tetrapolymerization of the monopyrrole PBG into the hydroxymethylbilane pre-uroporphyrinogen in several discrete steps. The sequence is that of Porphobilinogen deaminase, chloroplastic (HEMC) from Pisum sativum (Garden pea).